Here is a 362-residue protein sequence, read N- to C-terminus: 3-isopropylmalate dehydrogenase (362 aa).

An NAD(+)-binding site is contributed by Gly78–Glu91. Residues Arg99, Arg109, Arg138, and Asp227 each contribute to the substrate site. The Mg(2+) site is built by Asp227, Asp251, and Asp255. Residue Gly285 to Asn297 participates in NAD(+) binding.

The protein belongs to the isocitrate and isopropylmalate dehydrogenases family. LeuB type 1 subfamily. Homodimer. The cofactor is Mg(2+). Mn(2+) is required as a cofactor.

The protein localises to the cytoplasm. It catalyses the reaction (2R,3S)-3-isopropylmalate + NAD(+) = 4-methyl-2-oxopentanoate + CO2 + NADH. It functions in the pathway amino-acid biosynthesis; L-leucine biosynthesis; L-leucine from 3-methyl-2-oxobutanoate: step 3/4. In terms of biological role, catalyzes the oxidation of 3-carboxy-2-hydroxy-4-methylpentanoate (3-isopropylmalate) to 3-carboxy-4-methyl-2-oxopentanoate. The product decarboxylates to 4-methyl-2 oxopentanoate. This chain is 3-isopropylmalate dehydrogenase, found in Photobacterium profundum (strain SS9).